The following is a 182-amino-acid chain: ATP-dependent protease subunit HslV (182 aa).

Threonine 7 is a catalytic residue. Residues alanine 166, cysteine 169, and threonine 172 each contribute to the Na(+) site.

Belongs to the peptidase T1B family. HslV subfamily. In terms of assembly, a double ring-shaped homohexamer of HslV is capped on each side by a ring-shaped HslU homohexamer. The assembly of the HslU/HslV complex is dependent on binding of ATP.

It localises to the cytoplasm. It carries out the reaction ATP-dependent cleavage of peptide bonds with broad specificity.. With respect to regulation, allosterically activated by HslU binding. In terms of biological role, protease subunit of a proteasome-like degradation complex believed to be a general protein degrading machinery. In Albidiferax ferrireducens (strain ATCC BAA-621 / DSM 15236 / T118) (Rhodoferax ferrireducens), this protein is ATP-dependent protease subunit HslV.